We begin with the raw amino-acid sequence, 105 residues long: Met repressor (105 aa).

The protein belongs to the MetJ family. Homodimer.

It localises to the cytoplasm. This regulatory protein, when combined with SAM (S-adenosylmethionine) represses the expression of the methionine regulon and of enzymes involved in SAM synthesis. In Actinobacillus succinogenes (strain ATCC 55618 / DSM 22257 / CCUG 43843 / 130Z), this protein is Met repressor.